Consider the following 376-residue polypeptide: Alanine racemase 1 (376 aa).

K40 acts as the Proton acceptor; specific for D-alanine in catalysis. K40 carries the post-translational modification N6-(pyridoxal phosphate)lysine. Residue R138 coordinates substrate. Residue Y268 is the Proton acceptor; specific for L-alanine of the active site. Residue M316 coordinates substrate.

It belongs to the alanine racemase family. Requires pyridoxal 5'-phosphate as cofactor.

The catalysed reaction is L-alanine = D-alanine. It participates in amino-acid biosynthesis; D-alanine biosynthesis; D-alanine from L-alanine: step 1/1. Catalyzes the interconversion of L-alanine and D-alanine. May also act on other amino acids. The chain is Alanine racemase 1 (alr1) from Oceanobacillus iheyensis (strain DSM 14371 / CIP 107618 / JCM 11309 / KCTC 3954 / HTE831).